Here is a 90-residue protein sequence, read N- to C-terminus: Progonadoliberin-3 (90 aa).

The first 23 residues, 1 to 23 (MEANSRVMVRVLLLALVVQVTLS), serve as a signal peptide directing secretion. A Pyrrolidone carboxylic acid modification is found at Q24. G33 is subject to Glycine amide. Positions 56-90 (LPEEASAQTQERLRPYNVINDDSSHFDRKKRSPNK) are disordered.

The protein belongs to the GnRH family.

The protein resides in the secreted. In terms of biological role, stimulates the secretion of gonadotropins. This Dicentrarchus labrax (European seabass) protein is Progonadoliberin-3 (gnrh3).